The sequence spans 7785 residues: MSSADVAATIVRLYESAVEAHPDKPVINDGHRVWSYRELNSAANRIAWWLIGRGVGPEQTVGVALDRGIDQIAALLGTLKAGAVYLPLDPVLPAERINYLLADATPSLILDGDAAASAGQPEDTPAVPLTSDSLAYVIYTSGSTGTPKGVGVTHGSMVNLARTVTGQYALGDTPRVLQLASLGFDVAIWELLTAVATGGTLVVSQADQLSGDDLLRVLREQRITHVTLPVPVLASLPPDAENQLPDLTTVHIGGETCPPELVRRWSAGRRLINGYGATETTVAATLTPPLTGPDAPIGKAIDGTRVYVLDDTLAQVVLGAAGELYVAGANVARGYLRRPGLTASRFLADPYGPPGSRMYRTGDVGLIRPDGQLEFLRRADDQVKIRGARVEPGELEAVLQRRTDVVHAAVTVRPDARGERQLVAYVVPAAAATGAAELRDDLRGTLPSYLVPSSVVLLDSLPLTPNGKVDRDALPDPEYAPAGLDRTARSPLEDMLRVVFAEILELPQVGFDDDFFDLGGHSLLAGRLIGRIRGTLGLEVHMKDFFEKSTPAALASYLQRQETGPARPELTRLPRPDRIPLSFAQQRLWFLHRLEGPSATYNMPLALHLTGKVDTGALAAALTDVIRRHEPLRTLIREVDGQPYQQILDPEEVRPALPVRQVGAAQLDEELRRSARHEFDLARQIPVRAELLTVSPDESVLMLVIHHIAGDGWSGAPLARDLVTAHSARLTGVAPQWPPLPVQYADYTLWQRAMLGGEEEPASPLNEQLRYWREQLADLPHEITVPGDRPRPAVATYRGGVVPITMDADLHAGITELARRNGATVYMVLQSTVTALLTRLGAGTDVAIGAGVAGRSEPALDDLVGLFVNMLVLRTDTAGSPRFTELLQQVRDTSLGAYGHQDIPFEQLVESLNPHRVAGRQSLFQVALVLQNNTSVPFDLPGLRVRAEQIPTGTARFDLSLSVTEHGDGISGTVEYAADLYDRATAEAVVERWIQLIRQVVADPARRVDTLDVTTPGDESRLAGWRRYERDVPPVTFGDLFARQVAATPDAIAVSDGGDVWTYREVNRYANHVADRLIDRGIGPEDFVAVAMPRSARLVASLLGVLKAGAAYVPVDLVFPARRNRHVIIDSNPRLVLTSRAGAENLPADLPCELVMIDAWGTGREDGPADADRVRPSNVDSPAYVIYTSGSTGQPKGVVVTHRGLAAFAETLRERCAAGPNDRVLQLSSPSVDASVLEMVWAFSSGARLVIASQYRLAGEELAQALAEQRITHAHIPPSALSTIPAEAAGRLPEFRRLSVGAESCPSELVRLWLPGRDFVNAYGPTECTVAASHTFPLAEARAPIGRPVIDAELYVLDETLRPAAPGVPGELYIGGAGLARGYLRRGGLTASRFVANPYGEPGSRVYRTGDVVRWNTDGELEYLGRSDEQVKVRGFRVEPGEVERVLASQPSVDRAVVVPRRDRSGAVSLAAYVVLAAASPAGFDDQLSEWNDIYDQVYAGFSGDAGNDFIGWTSSFTGGPIPIEEMREWQRSAVDAVRRFGRGRVLEIGSGSGLLMTPLADAVDEYWGTDLSEISIDRLRAFADARRWNHVRLSCQPAHDVSGLPRRYFDTVVINSVVQYFPSADYLRDVLAKVVDLLADGGRVIVGDVRHYGLLRVFHAAVHDFRGTEGLRAAVEHAMAVEKELLLAPEFFTSIDHPAVTGVEVTLKAGQASNELTGYRYEVVLHTAPARRLTTLPVLVWGRDTTDLDEVTGPARVTGIPNPRLAGGVAAVRLLDGMDAVPPAAGPELESEAVRRWAVQRGMRAVPTWSSNRWNTYDVVLIHAAEAEPLADVYRPADGVEPANVPEVARTAGKLVSELRSTVQGLLPDYMVPATITPIERIPVTPNGKIDRRALPDPEVVLSRGRHARTPLEQILCELYADILGLERVGVDDSFFDRGGHSLLATRLTSRIRSVLGVEALLQQVFAAPSPAELAVVLSEQQGRVQQALEPVARPEVLPLSFAQQRLWFLHKLEGPSATYNSPLALRLSGTLEVTALRAALGDVVGRHEALRTVFAETDGVPYQKVLDVADVDLSVREVAADELPGVLRDAARYEFDLAREIPVRAWLFAAGPGEWVLMLVLHHIAADGWSLGPLARDLATAYADRRMGRGPSWSPLPVQYADYTLWQRRLLGDEADPDSVFGRQLAYWRGQLAGLPQQVTLPTDRPRPQTASYAGDVTMFRLDAGLHADLLRLARTSGATLFMVLQAALVAVLTRLGAGDDVPLGSPIAGRSDDGLDDLVGFFVNTLVLRADTSGNPGFDELLERVRDTSLEAYAHQDVPFEFLVEKLNPHRSTAHSPLFQVLLAFQNNSDTSFHLPGLRAEREEIGTRVSRVDLTLNITEAFGVNGAPQGIRGAVEYATDLYDARTVESFAARFVRMLQAAVADPSRRINAVDLLSDEENATVLALSGRDAAVPESRVWPAVFEATAAAAPDATAVVEGQLSWTYAQLNANANRLARYLIDRGVGPEDVVGVLMPRSAMQIATVLAIGKAGAAFLPIDPAYPAERVEYLIADARPKMLLADTAHVGVAAGAIAIDEPAVATALREAPVTDPAGVAVRLEHPAYVIYTSGSTGRPKGTIVTHSGLAALAVSGCERAAVDRDSRVLQLTSPSFDVSVFEFLAAFHAGAVLVMPEPGRLAGEELAELLADAGVSHAFVPPSVLATLPDEAPGRLAGLRSLVVGGEACSADLVRRWSVGRRMTNLYGPTETTVAASISRPMSTGAHPIGAPLPGTRVYVLDANLRPVPPGARGELYISGIGVARGYLGRPVLTASRFVADPFGPAGARAYRTGDVVRWNADGELEYFGRSDHQLKIRGFRVEPGEIEAALVRRPSVAQAVVVARPDQHGFQALYAYVTAGAEPADAARLREELRAELPDYLVPAAIVVLDEFPLNANGKLDRNALPEPRFVTSAADIRSPGMPQEEILRSVFADVLGIERISADDNFFDLGGHSLLVTRLISRVRGTLGVDVSMQTFFNAPTPRQLAGQLLEGGPVPARLQPVPRPEALPLSFAQQRLWFLHKLEGPSATYNSPLAIKLSGELDVDALRLALADVVVRHEALRTVFAERAGNPYQRILDSAEVELPVREVPQSKLPDALREAARYEFDLAREIPLRAWLFTAGPGEWVLMLALHHVVADGWSLQVLVSNLTAAYTSRRAGHAPSWQPLPVQYADYTLWQRRHLGTEDDPDSVSSRQVSYWLEQLADLPDQVTLPTDRPRPAVASYRGETVTFDLDAEEHAELVRLARETGTTLFMILQAALAGLLTRLGAGTDIAIGSPIAGRTDDRLENLIGLFVNMLVLRTDTGGDPTLGELLTRVRETSLAAYAHQHMPFEYLVERLNPHRSAAHHPLVQILFGLQNTAEQNVSLPGVTASGMSVDTGVSRVDLSINIVEASAPDGSPAGLTGLVEFSTDLYDRATVEAFAARWVRVLRAMVVAPGSRLSGVQLLGADERVRLLQRWGAASGPVAAVTLAELFERRVAARPDAVAVVEGEVSWSYARLNAYANRVAWSLVERGVGVEDVVAVVLPRGAVQVATVLGVVKAGAAYLPVDPSYPRARVEYLLQDAGPALVIGESDVFDGQPEHDPVRPVPVDAAAYVIYTSGSTGQPKGVVVTHRGLASMAATQQRLGAGEGSRVLQFAALGFDATVWELVMALGAGAALVVPKTDQLAGEDLAAVLREQRITHLTLPPTVLATVPADRLPDLGTLVVAGEACPPELTARWSPGRRMFNAYGPTESTVCASISAELSPGLAPIGGPVLNTRLYVLDDALQPAASGVPGELYIAGEGLARGYRGRAGLTATRILADPYGPVGSRMYRTGDVVRWNADGDLEYLGRSDEQVKIRGFRVEPGEVASVLLRHPAVAQAAVIVRLEQLLAYAVPALGRAVRDGELRAYLQDELPEHTVPSAVVLLDEIPRTSHGKVDQRALPDPEQAGGRGRAPRTPQEELLCVLFAQVLDVQQVGPDDSFFDLGGHSLLATRLIIRIRRAFRCELPPRALFAAPSPAELAVVLSEQQGRVQQALEPVARPEVLPLSFAQQRLWFLHKLEGPSATYNSPLALRLSGTLEVTALRAALGDVVGRHEALRTVFAETDGVPYQKVLDVADVDLSVREVAADELPGVLRDAARYEFDLAREIPVRAWLFAAGPGEWVLMLVLHHIAADGWSLGPLARDLATAYADRRMGRGPSWSPLPVQYADYTLWQRRLLGDEADPDSVFGRQLAYWRGQLAGLPQQVTLPTDRPRPQTASYAGDVTMFRLDAGLHADLLRLARTSGATLFMVLQAALVAVLTRLGAGDDVPLGSPIAGRSDDGLDDLVGFFVNTLVLRADTSGNPGFDELLERVRDTSLEAYAHQDVPFEFLVEKLNPHRSTAHSPLFQVLLAFQNNSDTSFHLPGLRTRLEGVSTGLSRVDLFISLAEQPDAGGVIGAVEYATDLYDAATVEAFVGRWLRFLAAVAHDPEQRIGSVDLLLDGERERLTGWAYTEPEVEPATLSELFERRVAARPDAVAVVEGEVSWSYARLNAYANRVAWSLVERGVGVEDVVAVVLPRGAVQVATVLGVVKAGAAYLPVDPSYPRARVEYLLQDAGPALVIGESDVFDGQPEHDPVRPVPVDAAAYVIYTSGSTGQPKGVVVTHRGLAALATGTVGRNAVAGDSRVLLLASPSFDASVLELMIAIGAGAALVVSRESRLAGEELATLIAQARVTHAFVPPSVLATLPGAATGELPAFQGLVVGGEACSPDLVRRWSAGRRMTNLYGPTETTVATTVSRPLFGEAHPIGAPLPGWRVYVLDAGLHLVPPGSRGELYIGGVGLTRGYLRRAGLTASRFVADPFGPAGARMYRTGDVVRWNADGELEYLGRSDHQVQIRGIRVEPGEVQAALTAHPDVARAVVVVSDDRRGDPALVGYMVPERPGADPAAVREDLRRILPDHLVPVAIVVLPEIPLTPNGKLDRDALPDPEYETSRGREPRTPEEEILCGLFTEVLGLKQVGAEDDFFDLGGHSLLGTRLISGIRAKLGFEVRLLTLFEASTPAALARAMLEANAPARTALEPMPRPELLPLSFAQQRLWFLHKLEGPSPTYNMPLTLQLSGPLDVPALRAALTDVVGRHEALRTVFAEHDGQAYQRILDPVEIELPVHDAASDEALQAAARHRFDLAGEIPLRVSLYAAGPGEWVLMLVLHHIVADGWSLRPLARDLATAYAARTAGRAPDWAPPPVQYADYTLWHRELLGDDADPDSAFGRQLAFWRDRLADLPEQVTLPTDRPRPRVASYRGDVSTFQVDAELHAGLMALARQTGSTLFMVLQTALSALLTRSGAGTDVVVGAGVAGRTDERLDDLVGFFVNMVVLRTDTSDDPTFVELLQRVRASSLAAYAHQDIPFEYLVEKINPLRSASHQSLFQIAMVLQNNAEADFDLSGVRVWQEGRGTGTSRFDLSLSLTETTTADGRPTGVTGVVEFSTDLYDRATVEAFAARWVRVLRAMVVAPGSRLSGVQLLGADERVRLLQRWGAASGPVAAVTLAELFERRVAARPDAVAVVEGEVSWSYARLNAYANRVAWSLVERGVGVEDVVAVVLPRGAVQVATVLGVVKAGAAYLPVDPSYPRARVEYLLQDAGPALVIGESDVFDGQPEHDPVRPVPVDAAAYVIYTSGSTGQPKGVVVTHRGLSGLAATLRQRCAADVDSRILQASSPSFDAAVLELVWAWDSGAALVIASADRLAGDELARALADHRITHALIPPSVLSTLAADAPRTLTDFRTLIVGAEACPPELLRRWAPGRRMVNAYGPTEATVVASQTGELHEPPVSIGKPALGTRLYVLDERLGLAAPGVPGELYIAGAGVARGYRTRPSLTASRFLADPYGPAGTRMYRTGDLVRWNADGDLEYLGRSDEQVKIRGFRVEPGEVERVLAAQPSVARAVVVPRPDRSGAVSLAAYVVLADQGSATDFDDQLDEWRSIYHEVYSGLAREPGTDFAGWNSSFTGTPIPIEQMREWQRSAVEQVARFGPRRVLEIGAGSGLLMVPLIERTEEYWATDFSAAAVERLREYARERGWEHAHLRCQPAHDMWGLPRSHFDTIVLNSVVQYFPSTDYLRDVLGKALDLLADGGRLVVGDVRHHGLLRAMHTAVQEFRNPGSGSSAVDHAVAIEKELLLAPEFFTAFRHPRATGVEVLLKRGSADNELTAYRYEVVLHTGATRPVGDLPELVWGHDVTDLADVTAPARLTRIPNPRLVGINEPRLHPEQVRRWAAERSWRAVPTWSPRNWDGYDVVLLAADEDEALTDVYRPGTPEVVANVPAVARTAGEHVSELRGTIKSLLPDHMVPATITPIERIPLTPNGKIDRRALPEPEIVTTTTEERGPRDPYEEILCELYADLLGLPRVGVDESFFDLGGHSLLATRLTSRIRAVLGIEVPLQQVFAASTPAQLAAVLAQGSGRAGPALEPAPRPEVLPLSFAQQRLWFMQNLEGASATYNSPLAVRLSGALDVAAMRAALGDVLARHEVLRTVFGERRGEPYQRILDAVEIDLPVRAVAEGDLTQVLRDASRHEFDLSREIPVRASLFNTGRDEWVLLLVVHHVAVDGWSMRPLTRDLTTAYEQRAAGRVPDWAPLRVQYADFALWQHRMLGDEADPDSRLSRQLAYWRDQLAGLPRLVTLPADRPRPDEASHRGAMLTRNLDADLHQALRVLARRHGSTLFMALQAALGAQLSRSGAGTDIPVGAPIAGRADDALEDLVGFFINTLVLRIDTSGRPSFTRLLKQVRETSLAAYAHQDVPFDHLVEKLNPDRSPGQHPLFQVQLVLQNTPDAEFELAGLTARPQLDGVETGVSRVDLSVNAIETFDDHGLPAGLILVVEYATDLYDSATVDAFLDEFGQLLHEVADSPDQPIGGLELDNIAAPVPGTLPQLFETWAAATPSAIAVTDGAADMTYAELNSRANRMARALIDRGAGPEDLVAVLLPRSVRQVATILAIAKSGAAYLPIDPTYPADRVAYLCADALPKLIVTDAAGSARLGADQPVIDVDDPATVAQWESRPDTDPTDRDRTTALGLDHPAYVIYTSGSTGRPKGAVITQAGLAGAAEAWVQRWGFEPGSRVLQLSSPSFDASIMDFIVAFAAQGTLVLPEPGLIAGEALARVLTEKRITHLVTLPSVLASMPVDVAGRLTGLRGLLLGGEVLTPDLAARWSPGRRMINVYGQTETTVACTMTDPLAGERVTVGRPIPGTRVYVLDALLRVVPPGTDGELYVAGPAVGRGYLHRAGLTASRFVADPYGPPGSRMYRTGDLGRLNYAFELEYAGRTDEQVKIRGMRVEPGEVEAALAEHPAVARAAVAVRADRQGDLALFGYVIPVQAGADVSGIREDLRRSLPEHLVPAVMTAMTDFPLTPNGKVDRDALPAPQVTAPVGRGPRTPQEEILCGLFAELLGLGQIGVEDNFFDLGGHSLLANKLIARIAEVMGTEIPIRTFFAGPTVAQLAEQLGSDGTDRAFDVLLPLRTGGTLPPLFCIHPGAAICWSYADLLLHLSPDFPVYGLQSPALSHPDELPETLIQVADDCIEEMRQVQKTGPYYLLGQSFGGVVAHAMAARLEAAGEQVGLIVALDSEPSRSLSEHEQAQVIEATAKVYTGILEVLGVDPAALPSGNLTFAQFSELARTTNTLLGNVAEDEFHLLMAILHGNISIATRHRSERVDADMLIFGAAEERERVLDPEVWREFVGGEITYHPIPTSHSTIMAPEALQVIGPILEQHLRAVIAGNATTKEEN.

3 Carrier domains span residues 487–562, 1908–1983, and 2958–3033; these read TARS…QRQE, HART…SEQQ, and SPGM…LEGG. Residues serine 522, serine 1943, and serine 2993 each carry the O-(pantetheine 4'-phosphoryl)serine modification. The LRR 1 repeat unit spans residues 3088 to 3111; sequence RLALADVVVRHEALRTVFAERAGN. Carrier domains are found at residues 3978-4053, 5002-5077, and 6389-6464; these read APRT…SEQQ, EPRT…LEAN, and GPRD…AQGS. O-(pantetheine 4'-phosphoryl)serine occurs at positions 4013, 5037, and 6424. Residues 6853-6875 form an LRR 2 repeat; the sequence is TGVSRVDLSVNAIETFDDHGLPA. One can recognise a Carrier 7 domain in the interval 7432 to 7507; the sequence is GPRTPQEEIL…QLAEQLGSDG (76 aa). Serine 7467 carries the post-translational modification O-(pantetheine 4'-phosphoryl)serine.

The cofactor is pantetheine 4'-phosphate.

Probable non-canonical nonribosomal peptide synthetase (NRPS); part of the gene cluster that mediates the biosynthesis of cyclic heptapeptides, known as cyclomarins and also of cyclic dipeptides, called cyclomarazines, which have both antimicrobial and cytotoxic effects. First, CymD catalyzes the reverse N-prenylation of monomeric L-tryptophan with dimethylallyl diphosphate (DMAPP) to form N-(1,1-dimethylallyl)-tryptophan (r-N-DMAT). The N-(1,1-dimethylallyl)-tryptophan produced by CymD is then combined with a range of standard and nonproteinogenic amino acid substrates to synthesize the peptides, a process that is probably catalyzed by the non-canonical nonribosomal peptide synthetase (NRPS), CymA. Other proteins in the cluster catalyze further modifications of the peptides including CymV which catalyzes the oxidation of olefinic cyclomarins and cyclomarazines to their respective epoxide derivatives. This is Probable non-canonical nonribosomal peptide synthetase (NRPS) CymA from Salinispora arenicola (strain CNS-205).